Reading from the N-terminus, the 166-residue chain is Transcriptional repressor NrdR (166 aa).

Residues 3-34 fold into a zinc finger; that stretch reads CIKCGNMEDKVIDSRPIKEGKSIRRRRECLRC. An ATP-cone domain is found at 49-139; sequence LFVKKRNGSI…VYCKFHDAKD (91 aa).

It belongs to the NrdR family. The cofactor is Zn(2+).

Negatively regulates transcription of bacterial ribonucleotide reductase nrd genes and operons by binding to NrdR-boxes. The polypeptide is Transcriptional repressor NrdR (Methylacidiphilum infernorum (isolate V4) (Methylokorus infernorum (strain V4))).